Reading from the N-terminus, the 445-residue chain is Deoxyribodipyrimidine photo-lyase (445 aa).

Residues 20–148 (SYVVYWMQAS…QVESNVIVPV (129 aa)) enclose the Photolyase/cryptochrome alpha/beta domain. Residue Arg-239 coordinates DNA.

This sequence belongs to the DNA photolyase class-2 family. Requires FAD as cofactor. The cofactor is coenzyme F420-(gamma-Glu)n.

The catalysed reaction is cyclobutadipyrimidine (in DNA) = 2 pyrimidine residues (in DNA).. In terms of biological role, involved in repair of UV radiation-induced DNA damage. Catalyzes the light-dependent monomerization (300-600 nm) of cyclobutyl pyrimidine dimers (in cis-syn configuration), which are formed between adjacent bases on the same DNA strand upon exposure to ultraviolet radiation. This chain is Deoxyribodipyrimidine photo-lyase (phr), found in Methanothermobacter thermautotrophicus (strain ATCC 29096 / DSM 1053 / JCM 10044 / NBRC 100330 / Delta H) (Methanobacterium thermoautotrophicum).